The chain runs to 410 residues: Adenosine receptor A2a (410 aa).

Over 1–4 (MGSS) the chain is Extracellular. Residues 5 to 29 (VYIMVELAIAVLAILGNVLVCWAVW) traverse the membrane as a helical segment. The Cytoplasmic segment spans residues 30–39 (INSNLQNVTN). Residues 40 to 63 (FFVVSLAAADIAVGVLAIPFAITI) traverse the membrane as a helical segment. Over 64–74 (STGFCAACHGC) the chain is Extracellular. 3 disulfide bridges follow: C68–C154, C71–C143, and C74–C161. The chain crosses the membrane as a helical span at residues 75–97 (LFFACFVLVLTQSSIFSLLAIAI). Topologically, residues 98–117 (DRYIAIRIPLRYNGLVTGMR) are cytoplasmic. The helical transmembrane segment at 118 to 140 (AKGIIAICWVLSFAIGLTPMLGW) threads the bilayer. Residues 141–168 (NNCSQKDENSTKTCGEGRVTCLFEDVVP) are Extracellular-facing. N-linked (GlcNAc...) asparagine glycans are attached at residues N142 and N149. E164 contacts adenosine. A helical membrane pass occupies residues 169 to 193 (MNYMVYYNFFAFVLLPLLLMLAIYL). Topologically, residues 194-229 (RIFLAARRQLKQMESQPLPGERTRSTLQKEVHAAKS) are cytoplasmic. A helical membrane pass occupies residues 230–253 (LAIIVGLFALCWLPLHIINCFTFF). N248 serves as a coordination point for adenosine. C254 and C257 are oxidised to a cystine. Residues 254 to 261 (CSTCQHAP) are Extracellular-facing. The chain crosses the membrane as a helical span at residues 262 to 285 (PWLMYLAIILSHSNSVVNPFIYAY). Adenosine contacts are provided by S272 and H273. Residues 286 to 410 (RIREFRQTFR…ASWSSEFAPS (125 aa)) lie on the Cytoplasmic side of the membrane. Residues 322–410 (HSTEGEQVSL…ASWSSEFAPS (89 aa)) form an interaction with GAS2L2 region. The segment at 342–410 (ANGSAPHSGR…ASWSSEFAPS (69 aa)) is disordered. A compositionally biased stretch (basic and acidic residues) spans 377–389 (TQEHQEGQEHPGL). The segment covering 401–410 (ASWSSEFAPS) has biased composition (polar residues).

It belongs to the G-protein coupled receptor 1 family. Interacts (via cytoplasmic C-terminal domain) with USP4; the interaction is direct. May interact with DRD4. Interacts with NECAB2. Interacts (via cytoplasmic C-terminal domain) with GAS2L2; interaction enhances receptor-mediated adenylyl cyclase activity. Post-translationally, ubiquitinated. Deubiquitinated by USP4; leading to stabilization and expression at the cell surface.

The protein resides in the cell membrane. Its function is as follows. Receptor for adenosine. The activity of this receptor is mediated by G proteins which activate adenylyl cyclase. The polypeptide is Adenosine receptor A2a (Adora2a) (Mus musculus (Mouse)).